A 236-amino-acid polypeptide reads, in one-letter code: Rho-related GTP-binding protein RhoV (236 aa).

A disordered region spans residues 1–27 (MPPRELSEAEPPPLPASTPPPRRRSAP). Residues 10–20 (EPPPLPASTPP) show a composition bias toward pro residues. Ser-25 is subject to Phosphoserine. GTP-binding positions include 38-45 (GDGAVGKS), 85-89 (DTAGQ), and 143-146 (TQAD). Cys-234 carries S-palmitoyl cysteine lipidation.

Belongs to the small GTPase superfamily. Rho family. As to quaternary structure, interacts with PAK2. Requires Mg(2+) as cofactor.

It is found in the cell membrane. Its subcellular location is the endosome membrane. Functionally, plays a role in the control of the actin cytoskeleton via activation of the JNK pathway. The sequence is that of Rho-related GTP-binding protein RhoV from Mus musculus (Mouse).